The following is a 335-amino-acid chain: UPF0353 protein Mjls_2492 (335 aa).

2 helical membrane-spanning segments follow: residues 18–38 (WFFL…IVAL) and 67–87 (LPAI…AGPT). In terms of domain architecture, VWFA spans 98–294 (VVMLVIDVSQ…EQLREVYANL (197 aa)). Residues 309-329 (VGWLRLGALVLALSALAALLL) form a helical membrane-spanning segment.

It belongs to the UPF0353 family.

The protein resides in the cell membrane. The polypeptide is UPF0353 protein Mjls_2492 (Mycobacterium sp. (strain JLS)).